Reading from the N-terminus, the 1403-residue chain is MRDLLNLLKQQNQVEEFDSIRIGLASPDMIRAWSYGEVKKPETINYRTFKPERDGLFCAKIFGPVKDYECLCGKYKRLKHRGVICEKCGVEVTLAKVRRERMGHIELASPVAHIWFLKSLPSRISLLLDMTLRDIERVLYFEASVVIDPGMTPLERGQLLADEAYLQAIEEYGDEFDARMGAEAVQKMLKTLDLKGEAIRLREEITGTNSDTKIKKFSKRLKLIEAFIDSGNRSEWMILEVLPVLPPDLRPLVPLEGGRFATSDLNDLYRRVINRNNRLKRLLDLNAPDIIVRNEKRMLQESVDALLDNGRRGRAITGTNKLPLKSLADMIKGKQGRFRQNLLGKRVDYSGRSVIVVGPTLKLHQCGLPKKMALELFKPFIFGKLERAGLATTIKAAKKLVEREGPEVWDVLEEVIREHPVMLNRAPTLHRLGIQAFEPVLIEGKAIQLHPLVCVAFNADFDGDQMAVHVPLSLEAQLEARALMMSTNNILSPANGEPIIVPTQDVVLGLYYMTCERVNAKGEGMLFADINEVRRAYETSIAELHAKISVRITEIDPSKPEGEGETTRLVNTTVGRALLSELLPPGLPFELANKNMTKKEISRLVNICYRRLGLKTSVVFADRLMYLGFRQATLSGISIGVNDMVVPKEKQAILADAEEEVKEIEDQYASGLVTNGERYNKVVDIWSHTNDQVAKAMMERLGSEEVYDAKGNVVKQQTFNSIYMMADSGARGSAAQIRQLAGMRGLMAKPDGSIIETPITANFREGLDVLQYFISTHGARKGLADTALKTANSGYLTRRLVDVAQDLVVTKDDCGTTRGINITPFVEGGDVVEPLRERVLGRVLALNVYVPGSNEVAIPASTLLDESWVDYLETLGIDAVKVRSPITCETRYGICAACYGRDLGRGYRINIGEAIGVIAAQSIGEPGTQLTMRTFHIGGAASRTVTTDRIEVKYKGNIRLHNVKIVQHDSGKYVAVSRSGEVHIVDEQGRERERYKIPYGAELSAGDGDTVESGQVIATWAPHTHPVITEVAGKVRLQDFLEGSTVERQADEVTGLTSLTVLDPKQRGAAVKELRPMVKLVDETGSDLCLAGTDIPAHYYLPAGAVVSVEDEAMVGVGDVLARLPQESSKTRDITGGLPRVADLFEARKPKDPAVLAEISGTVSFGKETKGKQRLIITGSDGERHEELIPKWRQVNVFEGEHVEKGEAIVDGPPVPHDILRLRGVEELTYYIVNEVQEVYRLQGVKINDKHIEVIICQMLRKVEIIEPGDTSFLKGEQIDKPRLLEENEKMEKEDKLPARFEPVLLGITKASLATESFISAASFQETTRVLTEAAVTGKCDELRGLKENVIVGRLIPAGTGLAYHSERRRKRRMLEQPESLTADTGTSHYGEDEISESGAATA.

The Zn(2+) site is built by cysteine 70, cysteine 72, cysteine 85, and cysteine 88. The Mg(2+) site is built by aspartate 460, aspartate 462, and aspartate 464. 4 residues coordinate Zn(2+): cysteine 814, cysteine 888, cysteine 895, and cysteine 898. The segment at 1369 to 1403 is disordered; sequence RRKRRMLEQPESLTADTGTSHYGEDEISESGAATA. The span at 1379-1388 shows a compositional bias: polar residues; sequence ESLTADTGTS.

The protein belongs to the RNA polymerase beta' chain family. As to quaternary structure, the RNAP catalytic core consists of 2 alpha, 1 beta, 1 beta' and 1 omega subunit. When a sigma factor is associated with the core the holoenzyme is formed, which can initiate transcription. Mg(2+) is required as a cofactor. The cofactor is Zn(2+).

It carries out the reaction RNA(n) + a ribonucleoside 5'-triphosphate = RNA(n+1) + diphosphate. Its function is as follows. DNA-dependent RNA polymerase catalyzes the transcription of DNA into RNA using the four ribonucleoside triphosphates as substrates. This is DNA-directed RNA polymerase subunit beta' from Nitrosococcus oceani (strain ATCC 19707 / BCRC 17464 / JCM 30415 / NCIMB 11848 / C-107).